The primary structure comprises 641 residues: Macrolide export ATP-binding/permease protein MacB (641 aa).

The 239-residue stretch at 2-240 folds into the ABC transporter domain; the sequence is IKLENIKKSF…LKQNLKEIKP (239 aa). An ATP-binding site is contributed by 38 to 45; sequence GQSGSGKS. 4 consecutive transmembrane segments (helical) span residues 268-288, 516-536, 565-585, and 601-621; these read FLTMLGIIIGIASVICVVALA, LLISGIALISLMVGGIGVMNI, FLIEAILLCAIGGSIGIGLAY, and IFSTASIFIALGVSSLIGIVF.

It belongs to the ABC transporter superfamily. Macrolide exporter (TC 3.A.1.122) family. Homodimer.

Its subcellular location is the cell inner membrane. Non-canonical ABC transporter that contains transmembrane domains (TMD), which form a pore in the inner membrane, and an ATP-binding domain (NBD), which is responsible for energy generation. Confers resistance against macrolides. The chain is Macrolide export ATP-binding/permease protein MacB from Campylobacter fetus subsp. fetus (strain 82-40).